The sequence spans 347 residues: Probable E3 ubiquitin-protein ligase DTX3 (347 aa).

A disordered region spans residues 113–157 (EHPEMHRAGPPPLRAAPLLPPGARGLPPPPPPLPPPLPPRLREEA). Positions 121 to 151 (GPPPLRAAPLLPPGARGLPPPPPPLPPPLPP) are enriched in pro residues. The segment at 164 to 205 (CPICLGEIQNAKTLEKCRHSFCEGCITRALQVKKACPMCGRF) adopts an RING-type zinc-finger fold.

It belongs to the Deltex family. In terms of assembly, homodimer. May form a heterodimers with other members of the Deltex family. Interacts with NOTCH1.

It is found in the cytoplasm. It catalyses the reaction S-ubiquitinyl-[E2 ubiquitin-conjugating enzyme]-L-cysteine + [acceptor protein]-L-lysine = [E2 ubiquitin-conjugating enzyme]-L-cysteine + N(6)-ubiquitinyl-[acceptor protein]-L-lysine.. Its pathway is protein modification; protein ubiquitination. Its function is as follows. Regulator of Notch signaling, a signaling pathway involved in cell-cell communications that regulates a broad spectrum of cell-fate determinations. Probably acts both as a positive and negative regulator of Notch, depending on the developmental and cell context. Functions as an ubiquitin ligase protein in vitro, suggesting that it may regulate the Notch pathway via some ubiquitin ligase activity. This chain is Probable E3 ubiquitin-protein ligase DTX3 (DTX3), found in Homo sapiens (Human).